Here is a 472-residue protein sequence, read N- to C-terminus: UDP-glycosyltransferase 100 (472 aa).

The Proton acceptor role is filled by His15. His15 provides a ligand contact to an anthocyanidin. The Charge relay role is filled by Asp117. The UDP-alpha-D-glucose site is built by Ala344, Gln346, His361, Trp364, Asn365, Ser366, and Glu369. Gly384 serves as a coordination point for an anthocyanidin. Glu385 and Gln386 together coordinate UDP-alpha-D-glucose.

The protein belongs to the UDP-glycosyltransferase family.

It carries out the reaction (20S)-protopanaxadiol + UDP-alpha-D-glucose = (20S)-ginsenoside C-K + UDP + H(+). It catalyses the reaction (20S)-protopanaxatriol + UDP-alpha-D-glucose = (20S)-ginsenoside Rh1 + UDP + H(+). The catalysed reaction is (20S)-ginsenoside F1 + UDP-alpha-D-glucose = (20S)-ginsenoside Rg1 + UDP + H(+). The protein operates within secondary metabolite biosynthesis; terpenoid biosynthesis. Component of the dammarane-type triterpene saponins (e.g. PPT-type ginsenosides or panaxosides) biosynthetic pathway. Glycosyltransferase that catalyzes the biosynthesis of ginsenoside Rh1 from protopanaxatriol (PPT) and the conversion of ginsenoside F1 to ginsenoside Rg1. This chain is UDP-glycosyltransferase 100, found in Panax ginseng (Korean ginseng).